The following is a 105-amino-acid chain: ATP-dependent Clp protease adapter protein ClpS (105 aa).

Positions 1-27 (MVVMSAPTEPKSRPGTTGQRESAPEDV) are disordered.

It belongs to the ClpS family. In terms of assembly, binds to the N-terminal domain of the chaperone ClpA.

In terms of biological role, involved in the modulation of the specificity of the ClpAP-mediated ATP-dependent protein degradation. This Mycolicibacterium paratuberculosis (strain ATCC BAA-968 / K-10) (Mycobacterium paratuberculosis) protein is ATP-dependent Clp protease adapter protein ClpS.